We begin with the raw amino-acid sequence, 443 residues long: Palmitoyltransferase pfa5 (443 aa).

The next 2 membrane-spanning stretches (helical) occupy residues 17–37 (IIPP…TKPL) and 57–77 (AGAA…ATYL). Residues 96-137 (CTQNQTGSDGSKHRHRRHRRRKSGHHLSKTTEKTDRSDGGDV) are disordered. Residues 107–123 (KHRHRRHRRRKSGHHLS) are compositionally biased toward basic residues. A compositionally biased stretch (basic and acidic residues) spans 124–137 (KTTEKTDRSDGGDV). The region spanning 175–225 (VYCSTCCQFKTDRAHHCREVDRCVRKMDHFCPWVGGVVSETSFKFFIQFIV) is the DHHC domain. 2 consecutive transmembrane segments (helical) span residues 220–240 (FIQF…VFAI) and 256–276 (WIVC…VAIS). The tract at residues 410 to 443 (AGLEVSTESESADPVGAAETPQHEQRRGKHRRRN) is disordered.

Belongs to the DHHC palmitoyltransferase family. PFA5 subfamily. Post-translationally, autopalmitoylated.

It is found in the membrane. The enzyme catalyses L-cysteinyl-[protein] + hexadecanoyl-CoA = S-hexadecanoyl-L-cysteinyl-[protein] + CoA. This Aspergillus fumigatus (strain ATCC MYA-4609 / CBS 101355 / FGSC A1100 / Af293) (Neosartorya fumigata) protein is Palmitoyltransferase pfa5 (pfa5).